The sequence spans 176 residues: MGRTLEDKKQIVAGLQENLSDTVMTIVIDYQGLTVAEITELRNKLRPAGAQCKITKNTLMRRAIKGDEKWEPLSDWLSDSSAFLLIKDDLGGAIKAYQAFQKATKKTELRGGVMDGQPLSKEDIKAIGDLPSQEVLVAQIAGAINSVTAKVAVGINEVPASLARALQAHSDSDKAA.

The protein belongs to the universal ribosomal protein uL10 family. As to quaternary structure, part of the ribosomal stalk of the 50S ribosomal subunit. The N-terminus interacts with L11 and the large rRNA to form the base of the stalk. The C-terminus forms an elongated spine to which L12 dimers bind in a sequential fashion forming a multimeric L10(L12)X complex.

In terms of biological role, forms part of the ribosomal stalk, playing a central role in the interaction of the ribosome with GTP-bound translation factors. The polypeptide is Large ribosomal subunit protein uL10 (Acaryochloris marina (strain MBIC 11017)).